The sequence spans 487 residues: N-succinylglutamate 5-semialdehyde dehydrogenase (487 aa).

NAD(+) is bound at residue 221–226; the sequence is GSSDTG. Catalysis depends on residues glutamate 244 and cysteine 278.

The protein belongs to the aldehyde dehydrogenase family. AstD subfamily.

It catalyses the reaction N-succinyl-L-glutamate 5-semialdehyde + NAD(+) + H2O = N-succinyl-L-glutamate + NADH + 2 H(+). It participates in amino-acid degradation; L-arginine degradation via AST pathway; L-glutamate and succinate from L-arginine: step 4/5. Catalyzes the NAD-dependent reduction of succinylglutamate semialdehyde into succinylglutamate. The protein is N-succinylglutamate 5-semialdehyde dehydrogenase of Burkholderia vietnamiensis (strain G4 / LMG 22486) (Burkholderia cepacia (strain R1808)).